The chain runs to 404 residues: Serpin-Z2B (404 aa).

Residues Gly349–Phe373 form an RCL region.

The protein belongs to the serpin family.

In terms of biological role, probable serine protease inhibitor. The chain is Serpin-Z2B from Oryza sativa subsp. japonica (Rice).